A 148-amino-acid polypeptide reads, in one-letter code: MERHYYTYLIKEEFANHYFGRESVMFELFQDYHWTSLEKQQYEMTEKQIQYITQPIPILHMHQRLKMNLNKTDYRQLDYIYRIALPKAKGHATFMMKEHMIEIVASGDYEAETIFFEVLRKVSPCFLAMDFNSKRYGWLNPVKERNFV.

It belongs to the SirA family. In terms of assembly, interacts with DnaA. Forms a 1:1 complex with domain I of DnaA.

The protein resides in the cytoplasm. Its function is as follows. Inhibits DNA replication initiation during sporulation, preventing overinitiation and thus enforcing diploidy; probably the main regulator of sporulation replication initiation under Spo0A control. During sporulation SirA prevents DnaA association with the replication origin to prevent excessive chromosome replication. Alternatively SirA binds to domain I of DnaA and prevent its interaction with DnaD, preventing DNA replication initiation. Upon ectopic expression during vegetative growth reduces chromosome copy number, leading to elongated cells with that can have a single nucleoid or be anucleate. Ectopic expression during vegetative growth blocks DnaA at oriC while blocking recruitment of DnaD to oriC. Plays a significant role during the onset of sporulation. The sequence is that of Sporulation inhibitor of replication protein SirA from Bacillus subtilis (strain 168).